The sequence spans 185 residues: Lipopolysaccharide export system protein LptA (185 aa).

The N-terminal stretch at 1-27 is a signal peptide; it reads MKFKTNKLSLNLVLASSLLAASIPAFA. The segment at 166-185 is disordered; that stretch reads PSQLQDKNNKGQTPAQKKGN.

The protein belongs to the LptA family. In terms of assembly, component of the lipopolysaccharide transport and assembly complex.

It localises to the periplasm. In terms of biological role, involved in the assembly of lipopolysaccharide (LPS). Required for the translocation of LPS from the inner membrane to the outer membrane. May form a bridge between the inner membrane and the outer membrane, via interactions with LptC and LptD, thereby facilitating LPS transfer across the periplasm. The polypeptide is Lipopolysaccharide export system protein LptA (Escherichia coli O157:H7).